The primary structure comprises 203 residues: 3-isopropylmalate dehydratase small subunit (203 aa).

This sequence belongs to the LeuD family. LeuD type 1 subfamily. In terms of assembly, heterodimer of LeuC and LeuD.

The enzyme catalyses (2R,3S)-3-isopropylmalate = (2S)-2-isopropylmalate. It participates in amino-acid biosynthesis; L-leucine biosynthesis; L-leucine from 3-methyl-2-oxobutanoate: step 2/4. In terms of biological role, catalyzes the isomerization between 2-isopropylmalate and 3-isopropylmalate, via the formation of 2-isopropylmaleate. This chain is 3-isopropylmalate dehydratase small subunit, found in Pelagibacter ubique (strain HTCC1062).